The chain runs to 328 residues: Pantothenate kinase (328 aa).

Residues 1-12 (MAAPLNAQTRAP) are compositionally biased toward polar residues. The tract at residues 1-22 (MAAPLNAQTRAPQATGRAPDFS) is disordered. 113–120 (GSVAVGKS) serves as a coordination point for ATP.

It belongs to the prokaryotic pantothenate kinase family.

It localises to the cytoplasm. The enzyme catalyses (R)-pantothenate + ATP = (R)-4'-phosphopantothenate + ADP + H(+). The protein operates within cofactor biosynthesis; coenzyme A biosynthesis; CoA from (R)-pantothenate: step 1/5. The protein is Pantothenate kinase of Corynebacterium efficiens (strain DSM 44549 / YS-314 / AJ 12310 / JCM 11189 / NBRC 100395).